Reading from the N-terminus, the 357-residue chain is MSELVAGPHTRAPLSLPTLMRQVLLAAAPATAFGVWLYGWPALNLLLITLVTVLVAEAACLRAAGRPVRSGLGDSSALVAGWILAMSLPPWAPWWIGVIGGLLAVVLGKGVFGGTGQNLFNPAMVARVALLIAFPVEMTRWVEPAPLGSAVAPGFLESLGITFTGTADWDAVTGATTLDATRTAVTEGQSIETALPEAYQPALALLGYAPGSLAEGSALLLALGGVYLIYRRVIAWEIPAVMLATLAVLATVFHTLDPTRYADAGVHILAGSTLLAAFFIATDPTTSPTTTVGRAVFAAGCAVIVWVVRTYGGYPEATAFAVLLMNAFTPLIDHWIRPRVYGRTRLGAPLSTDREGP.

The next 3 helical transmembrane spans lie at 35-55 (VWLY…TVLV), 88-108 (LPPW…VVLG), and 119-139 (LFNP…VEMT). Threonine 176 is subject to FMN phosphoryl threonine. 5 consecutive transmembrane segments (helical) span residues 209–229 (APGS…VYLI), 233–253 (VIAW…ATVF), 261–281 (YADA…FFIA), 295–315 (AVFA…GGYP), and 316–336 (EATA…DHWI).

Belongs to the NqrB/RnfD family. The complex is composed of six subunits: RnfA, RnfB, RnfC, RnfD, RnfE and RnfG. The cofactor is FMN.

Its subcellular location is the cell inner membrane. Its function is as follows. Part of a membrane-bound complex that couples electron transfer with translocation of ions across the membrane. In Halorhodospira halophila (strain DSM 244 / SL1) (Ectothiorhodospira halophila (strain DSM 244 / SL1)), this protein is Ion-translocating oxidoreductase complex subunit D.